The chain runs to 809 residues: Probable replication endonuclease from prophage-like region (809 aa).

Catalysis depends on O-(5'-phospho-DNA)-tyrosine intermediate residues Tyr-503 and Tyr-507.

Belongs to the phage GPA family.

Its function is as follows. Possible endonuclease which induces a single-strand cut and initiates DNA replication. This chain is Probable replication endonuclease from prophage-like region, found in Salmonella typhimurium (strain LT2 / SGSC1412 / ATCC 700720).